The sequence spans 613 residues: Glutamyl-tRNA(Gln) amidotransferase subunit E (613 aa).

Belongs to the GatB/GatE family. GatE subfamily. Heterodimer of GatD and GatE.

The enzyme catalyses L-glutamyl-tRNA(Gln) + L-glutamine + ATP + H2O = L-glutaminyl-tRNA(Gln) + L-glutamate + ADP + phosphate + H(+). Functionally, allows the formation of correctly charged Gln-tRNA(Gln) through the transamidation of misacylated Glu-tRNA(Gln) in organisms which lack glutaminyl-tRNA synthetase. The reaction takes place in the presence of glutamine and ATP through an activated gamma-phospho-Glu-tRNA(Gln). The GatDE system is specific for glutamate and does not act on aspartate. In Archaeoglobus fulgidus (strain ATCC 49558 / DSM 4304 / JCM 9628 / NBRC 100126 / VC-16), this protein is Glutamyl-tRNA(Gln) amidotransferase subunit E.